Reading from the N-terminus, the 379-residue chain is Pentatricopeptide repeat-containing protein At3g25210, mitochondrial (379 aa).

PPR repeat units lie at residues 142–177 (SVPL…DDSK), 179–221 (DLET…GVIP), 222–256 (DTFV…GSEP), 257–291 (NAYT…GMVP), 292–326 (NGSC…SLSP), and 327–361 (DMLT…DPVM).

The protein belongs to the PPR family. P subfamily.

The protein resides in the mitochondrion. The chain is Pentatricopeptide repeat-containing protein At3g25210, mitochondrial from Arabidopsis thaliana (Mouse-ear cress).